Reading from the N-terminus, the 256-residue chain is Capsid protein (256 aa).

The Bipartite nuclear localization signal signature appears at 3-20 (KRPADIVISTPASKVRRK). A Nuclear localization signal motif is present at residues 40–54 (RRRTWVNRPMYRKPM). The segment at 68 to 85 (CEGPCKVQSYEQRHDVAH) is a zinc-finger region. The Nuclear export signal signature appears at 101 to 122 (ITHRTGKRFCIKSIYVLGKIWM). Residues 200 to 247 (NRFYKIYNHCTYNHQEAAKYENHTENALLLYMACTHASNPVYATLKIR) carry the Bipartite nuclear localization signal motif.

This sequence belongs to the geminiviridae capsid protein family. As to quaternary structure, homomultimer. Binds to single-stranded and double-stranded viral DNA. Interacts (via nuclear localization signals) with host importin alpha-1a.

Its subcellular location is the virion. The protein resides in the host nucleus. Encapsidates the viral genome into characteristic twinned ('geminate') particles. Binds the genomic viral ssDNA and shuttles it into and out of the cell nucleus. Plays a role in protection of the genome from degradation, virus acquisition and transmission by insect vectors, infectivity, and systemic movement. The CP of monopartite geminiviruses is absolutely essential for virus movement. In Tomato leaf curl virus (strain Australia) (ToLCV), this protein is Capsid protein.